The following is a 310-amino-acid chain: HPr kinase/phosphorylase (310 aa).

Residues histidine 138 and lysine 159 contribute to the active site. Position 153 to 160 (glycine 153 to serine 160) interacts with ATP. A Mg(2+)-binding site is contributed by serine 160. Aspartate 177 acts as the Proton acceptor; for phosphorylation activity. Proton donor; for dephosphorylation activity in catalysis. Positions leucine 201–asparagine 210 are important for the catalytic mechanism of both phosphorylation and dephosphorylation. Position 202 (glutamate 202) interacts with Mg(2+). Arginine 243 is a catalytic residue. The important for the catalytic mechanism of dephosphorylation stretch occupies residues proline 264–arginine 269.

It belongs to the HPrK/P family. Homohexamer. Mg(2+) is required as a cofactor.

It catalyses the reaction [HPr protein]-L-serine + ATP = [HPr protein]-O-phospho-L-serine + ADP + H(+). The catalysed reaction is [HPr protein]-O-phospho-L-serine + phosphate + H(+) = [HPr protein]-L-serine + diphosphate. Catalyzes the ATP- as well as the pyrophosphate-dependent phosphorylation of a specific serine residue in HPr, a phosphocarrier protein of the phosphoenolpyruvate-dependent sugar phosphotransferase system (PTS). HprK/P also catalyzes the pyrophosphate-producing, inorganic phosphate-dependent dephosphorylation (phosphorolysis) of seryl-phosphorylated HPr (P-Ser-HPr). The two antagonistic activities of HprK/P are regulated by several intracellular metabolites, which change their concentration in response to the absence or presence of rapidly metabolisable carbon sources (glucose, fructose, etc.) in the growth medium. Also phosphorylates/dephosphorylates the HPr-like catabolite repression protein crh on a specific serine residue. Therefore, by controlling the phosphorylation state of HPr and crh, HPrK/P is a sensor enzyme that plays a major role in the regulation of carbon metabolism and sugar transport: it mediates carbon catabolite repression (CCR), and regulates PTS-catalyzed carbohydrate uptake and inducer exclusion. This chain is HPr kinase/phosphorylase, found in Shouchella clausii (strain KSM-K16) (Alkalihalobacillus clausii).